Reading from the N-terminus, the 821-residue chain is Ent-pimara-8(14),15-diene synthase (821 aa).

Mg(2+)-binding residues include D556, D560, N701, T705, and E709. Residues 556-560 carry the DDXXD motif motif; the sequence is DDFFD.

It belongs to the terpene synthase family. Mg(2+) serves as cofactor. In terms of tissue distribution, highly expressed in roots, at intermediate levels in stems and at lower levels in leaves.

It catalyses the reaction ent-copalyl diphosphate = ent-pimara-8(14),15-diene + diphosphate. It functions in the pathway secondary metabolite biosynthesis; terpenoid biosynthesis. Functionally, involved in the biosynthesis of ent-kaurene diterpenoids natural products. Catalyzes the conversion of ent-copalyl diphosphate to ent-pimara-8(14),15-diene. In Oryza sativa subsp. japonica (Rice), this protein is Ent-pimara-8(14),15-diene synthase.